We begin with the raw amino-acid sequence, 360 residues long: Inward rectifier potassium channel 13 (360 aa).

The Cytoplasmic segment spans residues 1 to 50 (MDSSNCKVNAPLLSQRHRRMVTKDGHSTLQMDGAQRGLVYLRDAWGILMD). Residues 51-77 (MRWRWMMLVFSASFVVHWLVFAVLWYA) traverse the membrane as a helical segment. Over 78–105 (VAEMNGDLEIDHDVPPENHTICVKHITS) the chain is Extracellular. Positions 106 to 122 (FTAAFSFSLETQLTIGY) form an intramembrane region, helical; Pore-forming. Residues 119–124 (TIGYGT) carry the Selectivity filter motif. Residues 123-131 (GTMFPSGDC) lie on the Extracellular side of the membrane. A helical membrane pass occupies residues 132–157 (PSAIALLAIQMLLGLMLEAFITGAFV). The Cytoplasmic portion of the chain corresponds to 158–360 (AKIARPKNRA…FQIAETGLTE (203 aa)). Phosphoserine; by PKA is present on Ser-287.

It belongs to the inward rectifier-type potassium channel (TC 1.A.2.1) family. KCNJ13 subfamily. As to quaternary structure, homotetramer. Interacts with RAB28; the interaction may facilitate cone outer segments phagocytosis. Post-translationally, phosphorylation at Ser-287 by PKA increases ionic currents. As to expression, expressed in retina.

Its subcellular location is the membrane. The protein resides in the cell membrane. The catalysed reaction is K(+)(in) = K(+)(out). With respect to regulation, inhibited by Ba(2+) and Cs(+), although sensitivity to those inhibitors is much lower than in other Kir channels. Its function is as follows. Inward rectifier potassium channels are characterized by a greater tendency to allow potassium to flow into the cell rather than out of it. Their voltage dependence is regulated by the concentration of extracellular potassium; as external potassium is raised, the voltage range of the channel opening shifts to more positive voltages. The inward rectification is mainly due to the blockage of outward current by internal magnesium. KCNJ13 has a very low single channel conductance, low sensitivity to block by external barium and cesium, and no dependence of its inward rectification properties on the internal blocking particle magnesium. This Mus musculus (Mouse) protein is Inward rectifier potassium channel 13.